The following is a 132-amino-acid chain: D-ribose pyranase (132 aa).

Histidine 20 (proton donor) is an active-site residue. Substrate contacts are provided by residues aspartate 28, histidine 98, and 121–123; that span reads YSN.

This sequence belongs to the RbsD / FucU family. RbsD subfamily. In terms of assembly, homodecamer.

Its subcellular location is the cytoplasm. The enzyme catalyses beta-D-ribopyranose = beta-D-ribofuranose. The protein operates within carbohydrate metabolism; D-ribose degradation; D-ribose 5-phosphate from beta-D-ribopyranose: step 1/2. Its function is as follows. Catalyzes the interconversion of beta-pyran and beta-furan forms of D-ribose. This is D-ribose pyranase from Kosmotoga olearia (strain ATCC BAA-1733 / DSM 21960 / TBF 19.5.1).